The following is a 122-amino-acid chain: Basic phospholipase A2 homolog (122 aa).

Intrachain disulfides connect cysteine 26/cysteine 116, cysteine 28/cysteine 44, cysteine 43/cysteine 96, cysteine 49/cysteine 122, cysteine 50/cysteine 89, cysteine 57/cysteine 82, and cysteine 75/cysteine 87. Positions 106 to 117 (KKHRVTVKFLCK) are important for membrane-damaging activities in eukaryotes and bacteria; heparin-binding.

Belongs to the phospholipase A2 family. Group II subfamily. K49 sub-subfamily. As to quaternary structure, homodimer; non-covalently linked. As to expression, expressed by the venom gland.

The protein resides in the secreted. Snake venom phospholipase A2 (PLA2) that has almost no phospholipase A2 activity. Is myotoxic. Displays edema-inducing activities. A model of myotoxic mechanism has been proposed: an apo Lys49-PLA2 is activated by the entrance of a hydrophobic molecule (e.g. fatty acid) at the hydrophobic channel of the protein leading to a reorientation of a monomer. This reorientation causes a transition between 'inactive' to 'active' states, causing alignment of C-terminal and membrane-docking sites (MDoS) side-by-side and putting the membrane-disruption sites (MDiS) in the same plane, exposed to solvent and in a symmetric position for both monomers. The MDoS region stabilizes the toxin on membrane by the interaction of charged residues with phospholipid head groups. Subsequently, the MDiS region destabilizes the membrane with penetration of hydrophobic residues. This insertion causes a disorganization of the membrane, allowing an uncontrolled influx of ions (i.e. calcium and sodium), and eventually triggering irreversible intracellular alterations and cell death. The sequence is that of Basic phospholipase A2 homolog from Protobothrops mucrosquamatus (Taiwan habu).